Reading from the N-terminus, the 500-residue chain is DNA double-strand break repair helicase HerA (500 aa).

ATP contacts are provided by residues arginine 142, 151-156 (GSGKSN), and 459-460 (KI).

This sequence belongs to the HerA family. As to quaternary structure, homohexamer. Forms a complex with NurA.

It carries out the reaction Couples ATP hydrolysis with the unwinding of duplex DNA at the replication fork by translocating in the 5'-3' direction. This creates two antiparallel DNA single strands (ssDNA). The leading ssDNA polymer is the template for DNA polymerase III holoenzyme which synthesizes a continuous strand.. The catalysed reaction is ATP + H2O = ADP + phosphate + H(+). It catalyses the reaction Couples ATP hydrolysis with the unwinding of duplex DNA by translocating in the 3'-5' direction.. With respect to regulation, ATPase activity is stimulated in the presence of linear double-stranded (ds)DNA. Helicase activity requires the presence of NurA. LhrC-Core (Hel112) inhibits the exonuclease activity of the HerA-NurA complex on ss- and dsDNA, has no effect on the nicking activity of NurA. In terms of biological role, involved in DNA double-strand break (DSB) repair. Probably acts with NurA to stimulate resection of the 5' strand and produce the long 3' single-strand that is required for RadA loading. NurA and HerA together stimulate the end-resection of six nucleotides of a linear DNA substrate. Has DNA-dependent ATPase activity and bidirectional DNA helicase activity. Preferentially binds single stranded (ss)DNA, bubble and semiforked DNA substrate over other DNA molecules tested. Stimulates the exo- but not endonuclease activity of NurA. In Saccharolobus solfataricus (strain ATCC 35092 / DSM 1617 / JCM 11322 / P2) (Sulfolobus solfataricus), this protein is DNA double-strand break repair helicase HerA.